A 271-amino-acid chain; its full sequence is Zinc finger CCHC domain-containing protein 9 (271 aa).

A disordered region spans residues 1–40 (MTRWARVSTTYNKRPLPATSWEDMKKGSFEGTSQNLPKRK). S48 is modified (phosphoserine). 4 CCHC-type zinc fingers span residues 128–145 (MVCF…DCPA), 155–172 (GICY…KCKA), 184–201 (AKCF…SCPD), and 211–228 (GGCK…DCPE).

The protein resides in the nucleus. The protein localises to the nucleolus. Functionally, may down-regulate transcription mediated by NF-kappa-B and the serum response element. This Homo sapiens (Human) protein is Zinc finger CCHC domain-containing protein 9 (ZCCHC9).